The chain runs to 141 residues: Hemoglobin subunit alpha (141 aa).

Residues 1-141 (VLSANDKANV…VSTVLTSKYR (141 aa)) form the Globin domain. The residue at position 3 (S3) is a Phosphoserine. K7 and K11 each carry N6-succinyllysine. The residue at position 16 (K16) is an N6-acetyllysine; alternate. N6-succinyllysine; alternate is present on K16. A Phosphotyrosine modification is found at Y24. S35 carries the phosphoserine modification. K40 is modified (N6-succinyllysine). The residue at position 49 (S49) is a Phosphoserine. H58 is a binding site for O2. H87 is a binding site for heme b. S102 is subject to Phosphoserine. T108 carries the post-translational modification Phosphothreonine. Phosphoserine is present on residues S124 and S131. T134 and T137 each carry phosphothreonine. S138 is modified (phosphoserine).

Belongs to the globin family. Heterotetramer of two alpha chains and two beta chains. In terms of tissue distribution, red blood cells.

Functionally, involved in oxygen transport from the lung to the various peripheral tissues. Its function is as follows. Hemopressin acts as an antagonist peptide of the cannabinoid receptor CNR1. Hemopressin-binding efficiently blocks cannabinoid receptor CNR1 and subsequent signaling. This is Hemoglobin subunit alpha (HBA) from Suncus murinus (Asian house shrew).